We begin with the raw amino-acid sequence, 735 residues long: Protostadienol synthase A (735 aa).

The PFTB 1 repeat unit spans residues 129 to 170 (KNEMIRYLLNFVNEDGGWGLWINSPSTVFGTTMNYTMLRILG). Aspartate 460 acts as the Proton donor in catalysis. PFTB repeat units follow at residues 487–528 (LAEA…YDNV), 564–604 (MARC…ETVG), and 613–660 (CRNA…ALMG).

This sequence belongs to the terpene cyclase/mutase family.

The catalysed reaction is (S)-2,3-epoxysqualene = (17Z)-protosta-17(20),24-dien-3beta-ol. In terms of biological role, protostadienol synthase which cyclizes (3S)-oxidosqualene to (17Z)-protosta-17(20),24-dien-3-beta-ol (protostadienol), the biosynthetic precursor of helvolic acid, a secondary metabolite which promotes virulence. The sequence is that of Protostadienol synthase A (PDSA) from Arthroderma gypseum (strain ATCC MYA-4604 / CBS 118893) (Microsporum gypseum).